Here is an 84-residue protein sequence, read N- to C-terminus: Small ribosomal subunit protein uS17 (84 aa).

Belongs to the universal ribosomal protein uS17 family. As to quaternary structure, part of the 30S ribosomal subunit.

Functionally, one of the primary rRNA binding proteins, it binds specifically to the 5'-end of 16S ribosomal RNA. The chain is Small ribosomal subunit protein uS17 from Borreliella burgdorferi (strain ATCC 35210 / DSM 4680 / CIP 102532 / B31) (Borrelia burgdorferi).